Reading from the N-terminus, the 179-residue chain is ATP synthase subunit delta (179 aa).

The protein belongs to the ATPase delta chain family. As to quaternary structure, F-type ATPases have 2 components, F(1) - the catalytic core - and F(0) - the membrane proton channel. F(1) has five subunits: alpha(3), beta(3), gamma(1), delta(1), epsilon(1). F(0) has three main subunits: a(1), b(2) and c(10-14). The alpha and beta chains form an alternating ring which encloses part of the gamma chain. F(1) is attached to F(0) by a central stalk formed by the gamma and epsilon chains, while a peripheral stalk is formed by the delta and b chains.

The protein localises to the cell inner membrane. In terms of biological role, f(1)F(0) ATP synthase produces ATP from ADP in the presence of a proton or sodium gradient. F-type ATPases consist of two structural domains, F(1) containing the extramembraneous catalytic core and F(0) containing the membrane proton channel, linked together by a central stalk and a peripheral stalk. During catalysis, ATP synthesis in the catalytic domain of F(1) is coupled via a rotary mechanism of the central stalk subunits to proton translocation. Its function is as follows. This protein is part of the stalk that links CF(0) to CF(1). It either transmits conformational changes from CF(0) to CF(1) or is implicated in proton conduction. The chain is ATP synthase subunit delta from Alkalilimnicola ehrlichii (strain ATCC BAA-1101 / DSM 17681 / MLHE-1).